The chain runs to 610 residues: MTRAQSAADDARNAMVAGLLASGISVNGLQPSHNPQVAAKMFTTATKLDPAMCDAWLARLLAGDQTMDVLAGAWAAVRTFGWETRRLGVTDLQFRPEVSDGLFLRLAVTSVDSLACAYAAVLAENKRYQEASDLLDTTDPKHPFDAELVSYVRGVLYFRTKRWPDVLAQFPEATPWRHPELKAAGAAMATTALASLGVFEEAFRRAQEAIEGDRVPGAANIALYTQGMCLRHVGREEEAVELLRRVYSRDAKFSPAREALDNPNYRLVLTDPETIEARKDPWDPDSAPTRAQTEAARHAEMAAKYLAEGDAELNAMLGMEQAKKEIKLIKSTTKVNLARAKMGLPVPVTSRHTLLLGPPGTGKTSVARAFTKQLCGLTVLRKPLVVETSRTKLLGRYMADAEKNTEEMLEGSLGGAVFFDEMHTLHEKGYSQGDPYGNAIINTLLLYMENHRDELVVFGAGYAKAMEKMLEVNQGLRRRFSTVIEFFSYTPEELIALTKLMGQENEDVITEEEAQVLLPSYTRFYNDQNYSEDGDLIRGIDMLGNAGFVRNVVEKARDHRSFRLDDEDLDAVLNSDLTEFSELQMRRFRELTKEDLAEGLSAAVAEKKTN.

357-364 (GPPGTGKT) contacts ATP.

It belongs to the CbxX/CfxQ family. Part of the ESX-5 / type VII secretion system (T7SS), which is composed of cytosolic and membrane components.

The protein resides in the cytoplasm. Part of the ESX-5 specialized secretion system, which is responsible for the secretion of EsxN and a number of PE_PGRS and PPE proteins. EccA5 exhibits ATPase activity and may provide energy for the export of ESX-5 substrates. This Mycobacterium marinum (strain ATCC BAA-535 / M) protein is ESX-5 secretion system protein EccA5.